The chain runs to 283 residues: 1-acyl-sn-glycerol-3-phosphate acyltransferase alpha (283 aa).

Residues 1 to 26 (MDLWPGAWMLLLLLFLLLLFLLPTLW) form the signal peptide. The Lumenal segment spans residues 27–37 (FCSPSAKYFFK). Residues 38 to 58 (MAFYNGWILFLAVLAIPVCAV) form a helical membrane-spanning segment. Topologically, residues 59–127 (RGRNVENMKI…PGRCVPIAKR (69 aa)) are cytoplasmic. An HXXXXD motif motif is present at residues 104–109 (HQSSLD). A helical membrane pass occupies residues 128-148 (ELLWAGSAGLACWLAGVIFID). The Lumenal segment spans residues 149-283 (RKRTGDAISV…DYLKKPGGGG (135 aa)). The EGTR motif motif lies at 178–181 (EGTR).

It belongs to the 1-acyl-sn-glycerol-3-phosphate acyltransferase family. As to expression, widely expressed. Expressed in adipose tissue and at high levels in testis and pancreas. Expressed at lower levels in tissues such as heart, brain, placenta, kidney, lung, spleen, thymus, prostate, ovary, intestine, colon, leukocyte and liver.

The protein localises to the endoplasmic reticulum membrane. It catalyses the reaction a 1-acyl-sn-glycero-3-phosphate + an acyl-CoA = a 1,2-diacyl-sn-glycero-3-phosphate + CoA. The catalysed reaction is 1-(9Z-octadecenoyl)-sn-glycero-3-phosphate + (9Z)-octadecenoyl-CoA = 1,2-di-(9Z-octadecenoyl)-sn-glycero-3-phosphate + CoA. The enzyme catalyses 1-(9Z-octadecenoyl)-sn-glycero-3-phosphate + hexadecanoyl-CoA = 1-(9Z)-octadecenoyl-2-hexadecanoyl-sn-glycero-3-phosphate + CoA. It carries out the reaction heptadecanoyl-CoA + 1-(9Z-octadecenoyl)-sn-glycero-3-phosphate = 1-(9Z)-octadecenoyl-2-heptadecanoyl-sn-glycero-3-phosphate + CoA. It catalyses the reaction 1-(9Z-octadecenoyl)-sn-glycero-3-phosphate + octadecanoyl-CoA = 1-(9Z-octadecenoyl)-2-octadecanoyl-sn-glycero-3-phosphate + CoA. The catalysed reaction is 1-(9Z-octadecenoyl)-sn-glycero-3-phosphate + (9Z,12Z)-octadecadienoyl-CoA = 1-(9Z)-octadecenoyl-2-(9Z,12Z)-octadecadienoyl-sn-glycero-3-phosphate + CoA. The enzyme catalyses 1-(9Z-octadecenoyl)-sn-glycero-3-phosphate + tetradecanoyl-CoA = 1-(9Z)-octadecenoyl-2-tetradecanoyl-sn-glycero-3-phosphate + CoA. It carries out the reaction pentadecanoyl-CoA + 1-(9Z-octadecenoyl)-sn-glycero-3-phosphate = 1-(9Z)-octadecenoyl-2-pentadecanoyl-sn-glycero-3-phosphate + CoA. It catalyses the reaction 1-hexadecanoyl-sn-glycero-3-phosphate + (9Z)-octadecenoyl-CoA = 1-hexadecanoyl-2-(9Z-octadecenoyl)-sn-glycero-3-phosphate + CoA. The catalysed reaction is 1-(9Z,12Z,15Z)-octadecatrienoyl-sn-glycero-3-phosphate + (9Z)-octadecenoyl-CoA = 1-(9Z,12Z,15Z)-octadecatrienoyl-2-(9Z)-octadecenoyl-sn-glycero-3-phosphate + CoA. The enzyme catalyses 1-(6Z,9Z,12Z-octadecatrienoyl)-sn-glycero-3-phosphate + (9Z)-octadecenoyl-CoA = (6Z,9Z,12Z)-octadecatrienoyl-2-(9Z)-octadecenoyl-sn-glycero-3-phosphate + CoA. It carries out the reaction 1-eicosanoyl-sn-glycero-3-phosphate + (9Z)-octadecenoyl-CoA = 1-eicosanoyl-2-(9Z)-octadecenoyl-sn-glycero-3-phosphate + CoA. It catalyses the reaction 1-tetradecanoyl-sn-glycerol 3-phosphate + (9Z)-octadecenoyl-CoA = 1-tetradecanoyl-2-(9Z)-octadecenoyl-sn-glycero-3-phosphate + CoA. The catalysed reaction is 1-(9Z-octadecenoyl)-sn-glycero-3-phosphate + (5Z,8Z,11Z,14Z)-eicosatetraenoyl-CoA = 1-(9Z)-octadecenoyl-2-(5Z,8Z,11Z,14Z)-eicosatetraenoyl-sn-glycero-3-phosphate + CoA. The enzyme catalyses 1-(9Z-octadecenoyl)-sn-glycero-3-phosphate + dodecanoyl-CoA = 1-(9Z)-octadecenoyl-2-dodecanoyl-sn-glycero-3-phosphate + CoA. It carries out the reaction (6Z)-octadecenoyl-CoA + 1-(9Z-octadecenoyl)-sn-glycero-3-phosphate = 1-(9Z)-octadecenoyl-2-(6Z)-octadecenoyl-sn-glycero-3-phosphate + CoA. It catalyses the reaction (11Z)-octadecenoyl-CoA + 1-(9Z-octadecenoyl)-sn-glycero-3-phosphate = 1-(9Z)-octadecenoyl-2-(11Z)-octadecenoyl-sn-glycero-3-phosphate + CoA. The catalysed reaction is (9Z)-hexadecenoyl-CoA + 1-(9Z-octadecenoyl)-sn-glycero-3-phosphate = 1-(9Z-octadecenoyl)-2-(9Z-hexadecenoyl)-sn-glycero-3-phosphate + CoA. The protein operates within phospholipid metabolism; CDP-diacylglycerol biosynthesis; CDP-diacylglycerol from sn-glycerol 3-phosphate: step 2/3. Converts 1-acyl-sn-glycerol-3-phosphate (lysophosphatidic acid or LPA) into 1,2-diacyl-sn-glycerol-3-phosphate (phosphatidic acid or PA) by incorporating an acyl moiety at the sn-2 position of the glycerol backbone. The sequence is that of 1-acyl-sn-glycerol-3-phosphate acyltransferase alpha (AGPAT1) from Homo sapiens (Human).